Reading from the N-terminus, the 676-residue chain is MSKLYDLVSDYAPSGDQPTAIKQLTEGLDAGLAHQTLLGVTGSGKTFTLANVIAQAQRPAILLAPNKTLAAQLYGEMKAFFPNNAVEYFVSYYDYYQPEAYVPTTDTFIEKDSSVNAHIEQMRLSATKALLERKDAIIVASVSAIYGLGDPEAYLQMMLHIRRGDVMDQRDILRRLAELQYSRNDIAFERGQFRVRGEVIDVFPAESDQDAVRIEMFDDEIDCISVFDPLTGVVKQRDLPRFTIYPKTHYVTPRERILQAIENIKQELRERQTYLRDNNKLLEEQRISQRTQFDIEMMNELGFCSGIENYSRYLSGRAEGEPPPTLFDYLPHDGLLIIDESHVTVPQIGAMYKGDRSRKETLVEYGFRLPSALDNRPLKFEEFEALAPQTIFVSATPGNYELEKSAGEIADQVVRPTGLLDPVLEVRPVATQVDDLLSEIRIRAVKDERVLVTTLTKRMAEDLTEYLHEHDVKVRYLHSDIDTVERVEIIRDLRLGEFDVLVGINLLREGLDMPEVSLVAILDADKEGFLRSERSLIQTIGRAARNLHGKAILYADSITKSMKKAMDETERRREKQQAYNEKMGIQPQALKRNIKDIMELGDITKSRKQKVSKTVPLSKVAEPSLSYNVLTPQQLEKEITKLEAQMYKHAQDLEFELAAQKRDEIEKLRQQFIANS.

The region spanning 26-414 (EGLDAGLAHQ…SAGEIADQVV (389 aa)) is the Helicase ATP-binding domain. 39 to 46 (GVTGSGKT) lines the ATP pocket. The short motif at 92-115 (YYDYYQPEAYVPTTDTFIEKDSSV) is the Beta-hairpin element. Residues 432 to 598 (QVDDLLSEIR…ALKRNIKDIM (167 aa)) enclose the Helicase C-terminal domain. Residues 636–671 (EKEITKLEAQMYKHAQDLEFELAAQKRDEIEKLRQQ) form the UVR domain.

Belongs to the UvrB family. Forms a heterotetramer with UvrA during the search for lesions. Interacts with UvrC in an incision complex.

The protein localises to the cytoplasm. Its function is as follows. The UvrABC repair system catalyzes the recognition and processing of DNA lesions. A damage recognition complex composed of 2 UvrA and 2 UvrB subunits scans DNA for abnormalities. Upon binding of the UvrA(2)B(2) complex to a putative damaged site, the DNA wraps around one UvrB monomer. DNA wrap is dependent on ATP binding by UvrB and probably causes local melting of the DNA helix, facilitating insertion of UvrB beta-hairpin between the DNA strands. Then UvrB probes one DNA strand for the presence of a lesion. If a lesion is found the UvrA subunits dissociate and the UvrB-DNA preincision complex is formed. This complex is subsequently bound by UvrC and the second UvrB is released. If no lesion is found, the DNA wraps around the other UvrB subunit that will check the other stand for damage. This chain is UvrABC system protein B, found in Vibrio vulnificus (strain CMCP6).